The chain runs to 187 residues: MRLVLLGPPGSGKGTQATRLKEKLEIAHISTGDMLRAEIAAGTELGKQAKTVMDAGNLVSDDILLGMLESRLTQPDVAKGFILDGYPRNVAQANAMDGLLAKIGQPLDAVVQLDVATELLVERIAGRAKEQGRADDTPEAVRQRLQVYNDQTAPVVDFYAGRGTLARVDGVGELDEIEARILAAIKA.

An ATP-binding site is contributed by 10 to 15; the sequence is GSGKGT. The NMP stretch occupies residues 30-59; it reads STGDMLRAEIAAGTELGKQAKTVMDAGNLV. AMP-binding positions include T31, R36, 57 to 59, 85 to 88, and Q92; these read NLV and GYPR. The interval 126 to 136 is LID; it reads GRAKEQGRADD. R127 is a binding site for ATP. R133 and R144 together coordinate AMP. G172 is an ATP binding site.

Belongs to the adenylate kinase family. As to quaternary structure, monomer.

Its subcellular location is the cytoplasm. The enzyme catalyses AMP + ATP = 2 ADP. It functions in the pathway purine metabolism; AMP biosynthesis via salvage pathway; AMP from ADP: step 1/1. Functionally, catalyzes the reversible transfer of the terminal phosphate group between ATP and AMP. Plays an important role in cellular energy homeostasis and in adenine nucleotide metabolism. The chain is Adenylate kinase from Stenotrophomonas maltophilia (strain K279a).